The following is a 292-amino-acid chain: Phosphoribosylglycinamide formyltransferase, chloroplastic (292 aa).

The transit peptide at 1-65 directs the protein to the chloroplast; it reads MESRVLFSSQ…KAASSTPQIV (65 aa). 88 to 90 contacts N(1)-(5-phospho-beta-D-ribosyl)glycinamide; the sequence is GSN. Residues 167 to 170 and N184 contribute to the (6R)-10-formyltetrahydrofolate site; that span reads LKLI. H186 (proton donor) is an active-site residue. D227 provides a ligand contact to (6R)-10-formyltetrahydrofolate. E256 is a binding site for N(1)-(5-phospho-beta-D-ribosyl)glycinamide.

Belongs to the GART family.

Its subcellular location is the plastid. It localises to the chloroplast. The catalysed reaction is N(1)-(5-phospho-beta-D-ribosyl)glycinamide + (6R)-10-formyltetrahydrofolate = N(2)-formyl-N(1)-(5-phospho-beta-D-ribosyl)glycinamide + (6S)-5,6,7,8-tetrahydrofolate + H(+). Its pathway is purine metabolism; IMP biosynthesis via de novo pathway; N(2)-formyl-N(1)-(5-phospho-D-ribosyl)glycinamide from N(1)-(5-phospho-D-ribosyl)glycinamide (10-formyl THF route): step 1/1. This is Phosphoribosylglycinamide formyltransferase, chloroplastic (PUR3) from Arabidopsis thaliana (Mouse-ear cress).